The sequence spans 226 residues: MDSAETDTPSTRSTPNGPGLRQRKLRRTRDQLIREALELFLAQGYEHTTVEQIAEAVEVHPRTFFRHFASKEEVALTPISAIDEAFLAALEVRPAGENPLQAMSGAFRAVLGRVRDGELEGVDGALHMAMMRLVERTPGLLAEYLRRSEEMEGRLARIIAAREGVDLDDDFRPRFIVAVFKAVGRVVSREWYLRADTDLEALSVAFESALDSLRPELFADWRRPGA.

The segment covering 1–16 (MDSAETDTPSTRSTPN) has biased composition (polar residues). Positions 1–25 (MDSAETDTPSTRSTPNGPGLRQRKL) are disordered. One can recognise an HTH tetR-type domain in the interval 26–86 (RRTRDQLIRE…TPISAIDEAF (61 aa)). The segment at residues 49 to 68 (TVEQIAEAVEVHPRTFFRHF) is a DNA-binding region (H-T-H motif).

It participates in antibiotic biosynthesis; tetracenomycin C biosynthesis. Functionally, represses transcription of the divergently oriented tcmR and tcmA (tetracenomycin C resistance and export) genes by binding to an intergenic operator region. This binding is inhibited by tetracenomycin C. The polypeptide is HTH-type transcriptional regulator TcmR (tcmR) (Streptomyces glaucescens).